Here is a 551-residue protein sequence, read N- to C-terminus: MEEEVPGFYGESGKSVQATLSSLKMLDVGKWPIFSLCSEEELQLIRQACVFGSAGNEVLYTTVNDEIFVLGTNCSGCLGVGDIQSTIEPRRLDSLTGKKIASLSYGSGPHIVLATTDGEVFTWGHNAYSQLGNGTTNHGLVPCHISTNLSNKQVIEVACGSYHSLVLTSDGEVFAWGYNNSGQVGSGSTANQPIPRRVTGCLQNKVVMNIACGQMCSMAVVDTGEVYVWGYNGNGQLGLGSSGNQPTPCRVAALQGIRVQRVACGYAHTLVLTDEGQIYAWGANSYGQLGTGNKSNQSYPTPVVVEKDRIIEIAACHSAHTSAAKTQGGHVYMWGQCRGQSVILPHHTHFCCTDDVFACFATPAVTWRLLSVEPDDHLTVAESLKREFDNPDTADLKFLVDGKYIYAHKVLLKIRCEHFRSSLEDSEDDIVEMSEFSYPVFRAFLEYLYTDNISLSPEEAVGLLDLATFYSETRLKKLCQQTIKQGICEENAIALLSAAVKYDAQDLEEFCFRFCINHLTVVTQTSGFAEMDHDLLKNFISKASRVGAFKN.

RCC1 repeat units follow at residues 64 to 115, 117 to 169, 171 to 222, 223 to 274, 276 to 326, and 328 to 382; these read NDEI…VLAT, DGEV…VLTS, GEVF…AVVD, TGEV…VLTD, GQIY…AAKT, and GGHV…TVAE. In terms of domain architecture, BTB spans 394 to 457; it reads ADLKFLVDGK…LYTDNISLSP (64 aa).

As to expression, expressed in testis and heart (at protein level).

It is found in the cytoplasmic vesicle. The protein resides in the secretory vesicle. The protein localises to the acrosome. This chain is RCC1 and BTB domain-containing protein 2 (Rcbtb2), found in Mus musculus (Mouse).